The primary structure comprises 384 residues: MAFSKDKTSRYSEHVDAYRAACGHHPDLKSFDSKIQQRTSNLIDSLTVEAKTGSVSPHAVHKEVIDIHLVEVSKAVADVITECGEEVWENGTLQSLVKDYFNSTMETLKIFETVTQCVHEAKRGQRYIKAAVAQFKKDSEEKDVGVKKKRYGKTLEELMKFKAMGNPFDDGLLKTQFELMNKQQESLFDRVTETKERIAKEIEEVQKRISNVNTATIVSHVVFGAAAFGYAAGCIALMCTGVGAPLGAGMVTLLPVIVVQWVGVNYVLNNSLEALQKQLKALNKVKPIPERITEGMEADKEGMKSVPEQVDELKDQISSLLQTVDDAIGSEGDEVDVKLDMESLEDDVKTLTTKITEVCETVAKYSKIIKEARLHVLEKITGTG.

Residues glutamine 184–alanine 215 are a coiled coil. The next 2 helical transmembrane spans lie at isoleucine 217–leucine 237 and valine 242–valine 262. The stretch at valine 264–threonine 361 forms a coiled coil.

The protein belongs to the UPF0496 family.

The protein resides in the membrane. This chain is UPF0496 protein At3g28310/At3g28320, found in Arabidopsis thaliana (Mouse-ear cress).